The primary structure comprises 82 residues: M-theraphotoxin-Gr1a (82 aa).

A signal peptide spans M1–A21. Residues S22–R46 constitute a propeptide that is removed on maturation. 3 disulfide bridges follow: C48–C63, C55–C69, and C62–C76. At F80 the chain carries Phenylalanine amide.

Belongs to the neurotoxin 10 (Hwtx-1) family. 52 (MTx4) subfamily. As to expression, expressed by the venom gland.

Its subcellular location is the secreted. Its function is as follows. This cationic hydrophobic peptide acts on a lot of different channels and has an antimicrobial activity. It blocks mechanosensitive ion channels (also named stretch-activated channels or SACs), without having effect on whole-cell voltage-sensitive currents. It also affects acetylcholine receptors (nAChRs) through interactions with membrane lipids by prolonging the closing time without affecting channel conductance or opening activity. It shows high affinity for lipid bilayers. It acts by partitioning into the membrane and perturbing the interface between the channel and the lipid bilayer without necessarily being in physical contact with the channel. It inhibits atrial fibrillation as well as the membrane motor of outer hair cells at low doses. It also binds to the voltage sensor of voltage-gated potassium channels from the archaebacterium Aeropyrum pernix (KvAP) without affecting channel gating. It also shows a low inhibition on a large spectra of sodium channels (Nav1.1/SCN1A, Nav1.2/SCN2A, Nav1.3/SCN3A, Nav1.4/SCN4A, Nav1.5/SCN5A, Nav1.6/SCN8A, Nav1.7/SCN9A) (IC(50)=7.4-14 uM), and potassium channels Kv11.1/KCNH2 and Kv11.2/KCNH6 (IC(50)=11 uM for both). It exhibits antimicrobial activities against the Gram-positive bacteria B.subtilis (MIC=0.5 uM), S.aureus (MIC=2-4 uM), and S.epidermidis (MIC=4-8 uM), and Gram-negative bacteria S.typhimurium (MIC=32.64 uM), P.aeruginosa (MIC=8-16 uM), and E.coli (MIC=8-16 uM). The protein is M-theraphotoxin-Gr1a of Grammostola rosea (Chilean rose tarantula).